The sequence spans 218 residues: N-alpha-acetyltransferase 11 (218 aa).

The tract at residues 1-58 (MNIRNARPDDLMNMQHCNLLCLPENYQMKYYFYHGLSWPQLSYIAEDEDGKIVGYVLA) is interaction with NAA15. In terms of domain architecture, N-acetyltransferase spans 1-152 (MNIRNARPDD…DAYAMKRDLS (152 aa)). A disordered region spans residues 175-218 (EETQGGTLPDAGEACLPKNPTSKDSGSSDSTDVQDSSEDLDSIS). The span at 196-205 (SKDSGSSDST) shows a compositional bias: low complexity. Positions 209 to 218 (DSSEDLDSIS) are enriched in acidic residues.

It belongs to the acetyltransferase family. ARD1 subfamily. As to quaternary structure, component of the N-terminal acetyltransferase A (NatA) complex composed of NAA11 and NAA15. Interacts with HIF1A.

Its subcellular location is the cytoplasm. It is found in the nucleus. It carries out the reaction N-terminal glycyl-[protein] + acetyl-CoA = N-terminal N(alpha)-acetylglycyl-[protein] + CoA + H(+). The catalysed reaction is N-terminal L-alanyl-[protein] + acetyl-CoA = N-terminal N(alpha)-acetyl-L-alanyl-[protein] + CoA + H(+). The enzyme catalyses N-terminal L-seryl-[protein] + acetyl-CoA = N-terminal N(alpha)-acetyl-L-seryl-[protein] + CoA + H(+). It catalyses the reaction N-terminal L-valyl-[protein] + acetyl-CoA = N-terminal N(alpha)-acetyl-L-valyl-[protein] + CoA + H(+). It carries out the reaction N-terminal L-cysteinyl-[protein] + acetyl-CoA = N-terminal N(alpha)-acetyl-L-cysteinyl-[protein] + CoA + H(+). The catalysed reaction is N-terminal L-threonyl-[protein] + acetyl-CoA = N-terminal N(alpha)-acetyl-L-threonyl-[protein] + CoA + H(+). Its function is as follows. Displays alpha (N-terminal) acetyltransferase activity. Proposed alternative catalytic subunit of the N-terminal acetyltransferase A (NatA) complex. This is N-alpha-acetyltransferase 11 (Naa11) from Mus musculus (Mouse).